The sequence spans 1020 residues: Sodium/potassium-transporting ATPase subunit alpha-2 (1020 aa).

Positions 1-5 (MGRGA) are excised as a propeptide. The tract at residues 1–31 (MGRGAGREYSPAATTAENGGGKKKQKEKELD) is disordered. Over 6-85 (GREYSPAATT…NALTPPPTTP (80 aa)) the chain is Cytoplasmic. A Phosphoserine modification is found at S10. Positions 80 to 82 (PPP) are interaction with phosphoinositide-3 kinase. Residues 86-106 (EWVKFCRQLFGGFSILLWIGA) form a helical membrane-spanning segment. Residues 107–129 (ILCFLAYGIQAAMEDEPSNDNLY) are Extracellular-facing. A helical membrane pass occupies residues 130–150 (LGVVLAAVVIVTGCFSYYQEA). The Cytoplasmic portion of the chain corresponds to 151 to 286 (KSSKIMDSFK…VGRTPIAMEI (136 aa)). Residues 212–227 (DNSSLTGESEPQTRSP) are compositionally biased toward polar residues. The interval 212 to 231 (DNSSLTGESEPQTRSPEFTH) is disordered. A helical membrane pass occupies residues 287–306 (EHFIQLITGVAVFPGVSFFV). Over 307-318 (LSLILGYSWLEA) the chain is Extracellular. Residues 319–336 (VIFLIGIIVANVPEGLLA) form a helical membrane-spanning segment. Residues 337 to 769 (TVTVCLTLTA…EEGRLVFDNL (433 aa)) are Cytoplasmic-facing. D374 functions as the 4-aspartylphosphate intermediate in the catalytic mechanism. Phosphoserine is present on residues S439, S450, S496, and S559. At T570 the chain carries Phosphothreonine. Phosphoserine occurs at positions 587 and 672. 2 residues coordinate Mg(2+): D714 and D718. Residues 770-789 (KKSIAYTLTSNIPEITPFLL) form a helical membrane-spanning segment. Residues 790-799 (FIIANIPLPL) are Extracellular-facing. Residues 800-820 (GTVTILCIDLGTDMVPAISLA) traverse the membrane as a helical segment. At 821–840 (YEAAESDIMKRQPRNSQTDK) the chain is on the cytoplasmic side. S826 bears the Phosphoserine mark. Residues 841-863 (LVNERLISMAYGQIGMIQALGGF) traverse the membrane as a helical segment. The Extracellular segment spans residues 864-915 (FTYFVILAENGFLPSRLLGIRLDWDDRTMNDLEDSYGQEWTYEQRKVVEFTC). Residues 916-935 (HTAFFASIVVVQWADLIICK) traverse the membrane as a helical segment. Residues 936-948 (TRRNSVFQQGMKN) lie on the Cytoplasmic side of the membrane. S940 is modified (phosphoserine; by PKA). A helical membrane pass occupies residues 949-967 (KILIFGLLEETALAAFLSY). Topologically, residues 968 to 982 (CPGMGVALRMYPLKV) are extracellular. A helical transmembrane segment spans residues 983–1003 (TWWFCAFPYSLLIFIYDEVRK). Residues 1004 to 1020 (LILRRYPGGWVEKETYY) are Cytoplasmic-facing.

Belongs to the cation transport ATPase (P-type) (TC 3.A.3) family. Type IIC subfamily. As to quaternary structure, the sodium/potassium-transporting ATPase is composed of a catalytic alpha subunit, an auxiliary non-catalytic beta subunit and an additional regulatory subunit. Interacts with regulatory subunit FXYD1.

The protein resides in the membrane. It is found in the cell membrane. The catalysed reaction is K(+)(out) + Na(+)(in) + ATP + H2O = K(+)(in) + Na(+)(out) + ADP + phosphate + H(+). Its function is as follows. This is the catalytic component of the active enzyme, which catalyzes the hydrolysis of ATP coupled with the exchange of sodium and potassium ions across the plasma membrane. This action creates the electrochemical gradient of sodium and potassium, providing the energy for active transport of various nutrients. In Pongo abelii (Sumatran orangutan), this protein is Sodium/potassium-transporting ATPase subunit alpha-2 (ATP1A2).